Here is a 714-residue protein sequence, read N- to C-terminus: Protein HAPLESS 2-B (714 aa).

Residues 1–33 (MAPRRRRRAARSSRPLLLALLAAAVNNFAPAGG) form the signal peptide. The Extracellular segment spans residues 34-552 (VEVLAKSRLE…FFTGTTCSTR (519 aa)). 7 disulfide bridges follow: C45–C59, C134–C164, C146–C194, C165–C321, C167–C177, C304–C328, and C441–C479. The helical transmembrane segment at 553–573 (CWSFLKFVIHGLLLVAVLWLL) threads the bilayer. The Cytoplasmic portion of the chain corresponds to 574-714 (HRKGLFDPLY…HGDRRHHAWH (141 aa)). Residues 597–619 (RARRRHKRAHSHRHSHHHDAHKR) form a disordered region. The span at 598-619 (ARRRHKRAHSHRHSHHHDAHKR) shows a compositional bias: basic residues.

The protein belongs to the HAP2/GCS1 family.

The protein localises to the endoplasmic reticulum membrane. The protein resides in the cell membrane. Required for male fertility. Plays a role in pollen tube guidance and successful gamete attachment. Essential for the fusion of gametes during double fertilization, where one male gamete fuses with the egg to produce a zygote, and another male gamete fuses with the central cell to produce the endosperm. Mediates the fusion of cell membranes. Not required for pollen tube outgrowth. This chain is Protein HAPLESS 2-B (HAP2B), found in Oryza sativa subsp. japonica (Rice).